Here is a 2309-residue protein sequence, read N- to C-terminus: Collagen alpha-4(VI) chain (2309 aa).

The N-terminal stretch at 1-22 (MGTWKTFWLIISLAAGLGFVKS) is a signal peptide. The segment at 21 to 1410 (KSQRIVCREA…TCCNMYAKCY (1390 aa)) is nonhelical region. VWFA domains follow at residues 34 to 206 (DIVF…AQKL), 235 to 413 (DIVF…LQAL), 430 to 653 (DVVF…FQRV), 634 to 811 (DLVF…GNKL), 849 to 1018 (DIYF…IRDI), and 1030 to 1199 (DIIF…EKEI). An N-linked (GlcNAc...) asparagine glycan is attached at N188. A glycan (N-linked (GlcNAc...) asparagine) is linked at N754. N1114 carries N-linked (GlcNAc...) asparagine glycosylation. The segment at 1411–1744 (GDDGIRGEPG…GKMGTKGSKG (334 aa)) is triple-helical region. Residues 1414–1430 (GIRGEPGSRGEQGERGL) show a composition bias toward basic and acidic residues. A disordered region spans residues 1414 to 1746 (GIRGEPGSRG…MGTKGSKGLA (333 aa)). A compositionally biased stretch (gly residues) spans 1480–1489 (GEEGVGGLDG). The Cell attachment site signature appears at 1527-1529 (RGD). 2 stretches are compositionally biased toward low complexity: residues 1605–1621 (PRGRQGPPGFFGQKGDP) and 1650–1669 (PAGERGPRGQQGPRGQPGLF). Residues 1745-2309 (LADRTPCEIV…EGECLNYVLK (565 aa)) form a nonhelical region region. 2 consecutive VWFA domains span residues 1776 to 1957 (EVVF…ASCT) and 1982 to 2187 (DLVF…LNLL). Residues 2208 to 2210 (RGD) carry the Cell attachment site motif. The interval 2262–2300 (ALGSHGKDRADTEDIDQETPAKGRHLGPTHGPCPMGPEE) is disordered.

The protein belongs to the type VI collagen family. As to quaternary structure, trimers composed of three different chains: alpha-1(VI), alpha-2(VI), and alpha-3(VI) or alpha-4(VI) or alpha-5(VI) or alpha-6(VI). Prolines at the third position of the tripeptide repeating unit (G-X-Y) are hydroxylated in some or all of the chains. As to expression, in newborn, it is expressed in lung, kidney, brain, intestine, skin, sternum and, at weak level, calvaria. In adult, it is almost absent with some weak expression in ovary and very weak expression in spleen, lung, uterus and brain.

The protein localises to the secreted. It is found in the extracellular space. Its subcellular location is the extracellular matrix. Its function is as follows. Collagen VI acts as a cell-binding protein. This Mus musculus (Mouse) protein is Collagen alpha-4(VI) chain (Col6a4).